The sequence spans 307 residues: Cyclin-dependent kinase 5 activator 1 (307 aa).

Gly-2 carries the N-myristoyl glycine lipid modification. Ser-8 is modified (phosphoserine; by CDK5). Residues 97 to 136 (TFAQPPPAQPPAPPASQLSGSQTGGSSSVKKAPHPAVTSA) are disordered. Residues 100-110 (QPPPAQPPAPP) are compositionally biased toward pro residues. A compositionally biased stretch (low complexity) spans 111–124 (ASQLSGSQTGGSSS). Phosphothreonine; by CDK5 is present on Thr-138.

This sequence belongs to the cyclin-dependent kinase 5 activator family. As to quaternary structure, heterodimer composed of a catalytic subunit CDK5 and a regulatory subunit CDK5R1 (p25) and macromolecular complex composed of at least CDK5, CDK5R1 (p35) and CDK5RAP1 or CDK5RAP2 or CDK5RAP3. Only the heterodimer shows kinase activity. Interacts with EPHA4 and NGEF; may mediate the activation of NGEF by EPHA4. Interacts with RASGRF2. The complex p35/CDK5 interacts with CLOCK. Post-translationally, the p35 form is proteolytically cleaved by calpain, giving rise to the p25 form. P35 has a 5 to 10 fold shorter half-life compared to p25. The conversion results in deregulation of the CDK5 kinase: p25/CDK5 kinase displays an increased and altered tau phosphorylation in comparison to the p35/CDK5 kinase in vivo. In terms of processing, myristoylated. A proper myristoylation signal is essential for the proper distribution of p35. Ubiquitinated, leading to its degradation: degradation of p35 by proteasome results in down-regulation of CDK5 activity. During this process, CDK5 phosphorylates p35 and induces its ubiquitination and subsequent degradation. Ubiquitinated by the CRL2(FEM1B) complex, which recognizes the -Gly-Leu-Asp-Arg C-degron at the C-terminus, leading to its degradation. Post-translationally, phosphorylation at Ser-8 and Thr-138 by CDK5 prevents calpain-mediated proteolysis. As to expression, brain and neuron specific.

It localises to the cell membrane. It is found in the cell projection. Its subcellular location is the neuron projection. The protein resides in the nucleus. The protein localises to the cytoplasm. It localises to the perinuclear region. It is found in the perikaryon. In terms of biological role, p35 is a neuron specific activator of CDK5. The complex p35/CDK5 is required for neurite outgrowth and cortical lamination. Involved in dendritic spine morphogenesis by mediating the EFNA1-EPHA4 signaling. Activator of TPKII. The complex p35/CDK5 participates in the regulation of the circadian clock by modulating the function of CLOCK protein: phosphorylates CLOCK at 'Thr-451' and 'Thr-461' and regulates the transcriptional activity of the CLOCK-BMAL1 heterodimer in association with altered stability and subcellular distribution. The polypeptide is Cyclin-dependent kinase 5 activator 1 (CDK5R1) (Homo sapiens (Human)).